The chain runs to 389 residues: MAMSDRLDLVNPSEIRKLFDIAAGMKDVISLGIGEPDFDTPQHIKEYAKEALDMGLTHYGPNIGLPELREAIAEKLKKQNNIEADPNKEIMVLVGANQAFLMGLSAFLKDGEEVLIPTPAFVSYAPAVILAGGKPVEVPTYEENEFRLNVDELKKYVTEKTKALIINSPCNPTGSVLKKKDLEEIADFAVEHDLIVISDEVYEHFIYDDVKHYSIASLDGMFERTITVNGFSKTFAMTGWRLGFVAAPSWIIEKMVKFQMYNATCPVTFIQYAAAKALRDERSWKAVEEMRKEYDRRRKLVWKRLNEMGLPTVKPKGAFYIFPRIKDTGLTSKEFSELMLMEAKVAVVPGSAFGKAGEGYVRISYATAYEKLEEAMDRMEKVLREKKLT.

Positions 34 and 171 each coordinate L-aspartate. At lysine 233 the chain carries N6-(pyridoxal phosphate)lysine. Arginine 362 is an L-aspartate binding site.

Belongs to the class-I pyridoxal-phosphate-dependent aminotransferase family. In terms of assembly, homodimer. It depends on pyridoxal 5'-phosphate as a cofactor.

The protein localises to the cytoplasm. The enzyme catalyses L-aspartate + 2-oxoglutarate = oxaloacetate + L-glutamate. The protein is Aspartate aminotransferase (aspC) of Pyrococcus abyssi (strain GE5 / Orsay).